We begin with the raw amino-acid sequence, 201 residues long: Holliday junction branch migration complex subunit RuvA (201 aa).

The segment at Met-1–Leu-64 is domain I. The domain II stretch occupies residues Asp-65–Thr-143. The tract at residues Ala-144 to Glu-154 is flexible linker. The interval Glu-154–Phe-201 is domain III.

The protein belongs to the RuvA family. As to quaternary structure, homotetramer. Forms an RuvA(8)-RuvB(12)-Holliday junction (HJ) complex. HJ DNA is sandwiched between 2 RuvA tetramers; dsDNA enters through RuvA and exits via RuvB. An RuvB hexamer assembles on each DNA strand where it exits the tetramer. Each RuvB hexamer is contacted by two RuvA subunits (via domain III) on 2 adjacent RuvB subunits; this complex drives branch migration. In the full resolvosome a probable DNA-RuvA(4)-RuvB(12)-RuvC(2) complex forms which resolves the HJ.

It localises to the cytoplasm. In terms of biological role, the RuvA-RuvB-RuvC complex processes Holliday junction (HJ) DNA during genetic recombination and DNA repair, while the RuvA-RuvB complex plays an important role in the rescue of blocked DNA replication forks via replication fork reversal (RFR). RuvA specifically binds to HJ cruciform DNA, conferring on it an open structure. The RuvB hexamer acts as an ATP-dependent pump, pulling dsDNA into and through the RuvAB complex. HJ branch migration allows RuvC to scan DNA until it finds its consensus sequence, where it cleaves and resolves the cruciform DNA. The polypeptide is Holliday junction branch migration complex subunit RuvA (Chlorobaculum tepidum (strain ATCC 49652 / DSM 12025 / NBRC 103806 / TLS) (Chlorobium tepidum)).